Reading from the N-terminus, the 618-residue chain is UvrABC system protein C (618 aa).

The 79-residue stretch at 19-97 (SEPGIYRMLD…IKALRPKYNV (79 aa)) folds into the GIY-YIG domain. A UVR domain is found at 208–243 (QIILDALAERMKQAVNQLNFEEAAVLRDQIKNLRLI).

It belongs to the UvrC family. As to quaternary structure, interacts with UvrB in an incision complex.

The protein localises to the cytoplasm. Its function is as follows. The UvrABC repair system catalyzes the recognition and processing of DNA lesions. UvrC both incises the 5' and 3' sides of the lesion. The N-terminal half is responsible for the 3' incision and the C-terminal half is responsible for the 5' incision. The protein is UvrABC system protein C of Legionella pneumophila (strain Paris).